Reading from the N-terminus, the 113-residue chain is Large ribosomal subunit protein uL22 (113 aa).

This sequence belongs to the universal ribosomal protein uL22 family. As to quaternary structure, part of the 50S ribosomal subunit.

Functionally, this protein binds specifically to 23S rRNA; its binding is stimulated by other ribosomal proteins, e.g. L4, L17, and L20. It is important during the early stages of 50S assembly. It makes multiple contacts with different domains of the 23S rRNA in the assembled 50S subunit and ribosome. Its function is as follows. The globular domain of the protein is located near the polypeptide exit tunnel on the outside of the subunit, while an extended beta-hairpin is found that lines the wall of the exit tunnel in the center of the 70S ribosome. This chain is Large ribosomal subunit protein uL22, found in Herpetosiphon aurantiacus (strain ATCC 23779 / DSM 785 / 114-95).